The primary structure comprises 192 residues: Phosphoheptose isomerase (192 aa).

The 156-residue stretch at Leu37–Lys192 folds into the SIS domain. Residue Asn52 to Gly54 participates in substrate binding. Zn(2+)-binding residues include His61 and Glu65. Residues Glu65, Asn93 to Asp94, Ser119 to Ser121, Ser124, and Gln172 contribute to the substrate site. Zn(2+) is bound by residues Gln172 and His180.

The protein belongs to the SIS family. GmhA subfamily. In terms of assembly, homotetramer. Zn(2+) is required as a cofactor.

It is found in the cytoplasm. The enzyme catalyses 2 D-sedoheptulose 7-phosphate = D-glycero-alpha-D-manno-heptose 7-phosphate + D-glycero-beta-D-manno-heptose 7-phosphate. Its pathway is carbohydrate biosynthesis; D-glycero-D-manno-heptose 7-phosphate biosynthesis; D-glycero-alpha-D-manno-heptose 7-phosphate and D-glycero-beta-D-manno-heptose 7-phosphate from sedoheptulose 7-phosphate: step 1/1. Its function is as follows. Catalyzes the isomerization of sedoheptulose 7-phosphate in D-glycero-D-manno-heptose 7-phosphate. The chain is Phosphoheptose isomerase from Salmonella dublin (strain CT_02021853).